Here is a 92-residue protein sequence, read N- to C-terminus: Acylphosphatase (92 aa).

Residues 5–92 enclose the Acylphosphatase-like domain; sequence CIAAYVYGVV…TPFETFKIRY (88 aa). Catalysis depends on residues Arg20 and Asn38.

Belongs to the acylphosphatase family.

The catalysed reaction is an acyl phosphate + H2O = a carboxylate + phosphate + H(+). This is Acylphosphatase (acyP) from Yersinia enterocolitica serotype O:8 / biotype 1B (strain NCTC 13174 / 8081).